The primary structure comprises 808 residues: LisH domain-containing protein ARMC9 (808 aa).

The LisH domain occupies 7 to 39; that stretch reads YEADLLGLVKEFLNFGEFQETLETFTKECKTKG. A coiled-coil region spans residues 196–230; it reads ITLYKESLHNNQELLQQLQQQLMETEHKARTYKKC. 3 disordered regions span residues 576 to 599, 650 to 709, and 742 to 808; these read FDES…DALE, PLQR…DYCV, and GMEK…SYRK. Residues 579–599 are compositionally biased toward acidic residues; it reads SIESDDEEEEKDDEEDEDALE. 3 stretches are compositionally biased toward polar residues: residues 655–668, 677–709, and 775–784; these read VTPS…TVRK, TNTF…DYCV, and IAPQFSQSGP. The span at 785–808 shows a compositional bias: low complexity; it reads QQTSYSSSAGSSTRSRQSTQSYRK.

The protein localises to the cytoplasm. It localises to the cytoskeleton. Its subcellular location is the cilium basal body. It is found in the cell projection. The protein resides in the cilium. The protein localises to the microtubule organizing center. It localises to the centrosome. Its subcellular location is the centriole. Functionally, involved in ciliogenesis. It is required for appropriate acetylation and polyglutamylation of ciliary microtubules, and regulation of cilium length. Acts as a positive regulator of hedgehog (Hh)signaling. In Xenopus tropicalis (Western clawed frog), this protein is LisH domain-containing protein ARMC9 (armc9).